The chain runs to 453 residues: Tubulin delta chain (453 aa).

143 to 149 serves as a coordination point for GTP; that stretch reads AGGTGSG.

The protein belongs to the tubulin family. Found in a complex with TEDC1, TEDC2, TUBE1 and TUBD1.

The protein localises to the nucleus. The protein resides in the cytoplasm. Its subcellular location is the cytoskeleton. It localises to the microtubule organizing center. It is found in the centrosome. The protein localises to the centriole. The protein resides in the cell projection. Its subcellular location is the cilium. Acts as a positive regulator of hedgehog signaling and regulates ciliary function. This is Tubulin delta chain (TUBD1) from Homo sapiens (Human).